Consider the following 364-residue polypeptide: Probable mannose-1-phosphate guanylyltransferase 2 (364 aa).

GDP-alpha-D-mannose contacts are provided by Leu-6 and Val-7. The diphosphate site is built by Gly-9, Gly-11, Thr-12, Arg-13, and Lys-23. Residues Gly-88, Asn-112, Asp-114, Gly-149, and Asn-176 each coordinate GDP-alpha-D-mannose.

This sequence belongs to the transferase hexapeptide repeat family.

The enzyme catalyses alpha-D-mannose 1-phosphate + GTP + H(+) = GDP-alpha-D-mannose + diphosphate. Its pathway is nucleotide-sugar biosynthesis; GDP-alpha-D-mannose biosynthesis; GDP-alpha-D-mannose from alpha-D-mannose 1-phosphate (GTP route): step 1/1. Catalyzes a reaction of the Smirnoff-Wheeler pathway, the major route to ascorbate biosynthesis in plants. The protein is Probable mannose-1-phosphate guanylyltransferase 2 of Arabidopsis thaliana (Mouse-ear cress).